The chain runs to 421 residues: Probable sugar-binding periplasmic protein (421 aa).

A signal peptide spans 1–27 (MHKLLKLAAMGTAACALLAGMAPVANA).

The protein belongs to the bacterial solute-binding protein 1 family.

The protein localises to the periplasm. In terms of biological role, part of a binding-protein-dependent transport system for a sugar. The chain is Probable sugar-binding periplasmic protein from Brucella suis biovar 1 (strain 1330).